A 426-amino-acid chain; its full sequence is Phosphomethylpyrimidine synthase (426 aa).

Substrate is bound by residues Asn-65, Met-94, Tyr-123, His-162, 184–186 (SRG), 225–228 (DGMR), and Glu-264. His-268 serves as a coordination point for Zn(2+). Residue Tyr-291 participates in substrate binding. Position 332 (His-332) interacts with Zn(2+). 3 residues coordinate [4Fe-4S] cluster: Cys-408, Cys-411, and Cys-415.

The protein belongs to the ThiC family. It depends on [4Fe-4S] cluster as a cofactor.

The catalysed reaction is 5-amino-1-(5-phospho-beta-D-ribosyl)imidazole + S-adenosyl-L-methionine = 4-amino-2-methyl-5-(phosphooxymethyl)pyrimidine + CO + 5'-deoxyadenosine + formate + L-methionine + 3 H(+). It functions in the pathway cofactor biosynthesis; thiamine diphosphate biosynthesis. In terms of biological role, catalyzes the synthesis of the hydroxymethylpyrimidine phosphate (HMP-P) moiety of thiamine from aminoimidazole ribotide (AIR) in a radical S-adenosyl-L-methionine (SAM)-dependent reaction. The protein is Phosphomethylpyrimidine synthase of Methanococcus aeolicus (strain ATCC BAA-1280 / DSM 17508 / OCM 812 / Nankai-3).